We begin with the raw amino-acid sequence, 201 residues long: Probable thymidylate kinase (201 aa).

10 to 17 (GIDGSGKS) is a binding site for ATP.

This sequence belongs to the thymidylate kinase family.

It catalyses the reaction dTMP + ATP = dTDP + ADP. The chain is Probable thymidylate kinase from Methanococcoides burtonii (strain DSM 6242 / NBRC 107633 / OCM 468 / ACE-M).